A 182-amino-acid polypeptide reads, in one-letter code: Vacuolar protein sorting-associated protein 29 (182 aa).

Position 50 is an N6-acetyllysine (Lys50).

Belongs to the VPS29 family. As to quaternary structure, component of the commander complex consisting of the CCC subcomplex and the retriever subcomplex. Component of the heterotrimeric retriever complex formed by VPS26C, VPS29 and VPS35L; within the complex interacts with VPS35L. Component of the heterotrimeric retromer cargo-selective complex (CSC), also described as vacuolar protein sorting subcomplex (VPS), formed by VPS26 (VPS26A or VPS26B), VPS29 and VPS35. The CSC has a highly elongated structure with VPS26 and VPS29 binding independently at opposite distal ends of VPS35 as central platform. The CSC is believed to associate with variable sorting nexins to form functionally distinct retromer complex variants. The originally described retromer complex (also called SNX-BAR retromer) is a pentamer containing the CSC and a heterodimeric membrane-deforming subcomplex formed between SNX1 or SNX2 and SNX5 or SNX6 (also called SNX-BAR subcomplex); the respective CSC and SNX-BAR subcomplexes associate with low affinity. The CSC associates with SNX3 to form a SNX3-retromer complex. The CSC associates with SNX27, the WASH complex and the SNX-BAR subcomplex to form the SNX27-retromer complex. Interacts with VPS26A, VPS35, SNX1, SNX2, SNX3, SNX27, WASHC5. Interacts with TBC1D5; this interaction is blocked by VPS35L in the retriever complex. Interacts with SNX17; the interaction is indirect; SNX17 (via its C-terminus) interacts with the retriever complex (via VPS26C and VPS35L). Interacts with VPS26B and ANKRD27.

It localises to the cytoplasm. The protein localises to the membrane. The protein resides in the endosome membrane. Its subcellular location is the early endosome. It is found in the late endosome. Its function is as follows. Component of the commander complex that is essential for endosomal recycling of transmembrane cargos; the commander complex is composed of the CCC subcomplex and the retriever subcomplex. Component of the retriever complex, which is a heterotrimeric complex related to retromer cargo-selective complex (CSC) and essential for retromer-independent retrieval and recycling of numerous cargos such as integrin alpha-5/beta-1 (ITGA5:ITGB1). Component of the retromer cargo-selective complex (CSC). The CSC is believed to be the core functional component of retromer or respective retromer complex variants acting to prevent missorting of selected transmembrane cargo proteins into the lysosomal degradation pathway. The recruitment of the CSC to the endosomal membrane involves RAB7A and SNX3. The SNX-BAR retromer mediates retrograde transport of cargo proteins from endosomes to the trans-Golgi network (TGN) and is involved in endosome-to-plasma membrane transport for cargo protein recycling. The SNX3-retromer mediates the retrograde endosome-to-TGN transport of WLS distinct from the SNX-BAR retromer pathway. The SNX27-retromer is believed to be involved in endosome-to-plasma membrane trafficking and recycling of a broad spectrum of cargo proteins. The CSC seems to act as recruitment hub for other proteins, such as the WASH complex and TBC1D5. Required to regulate transcytosis of the polymeric immunoglobulin receptor (pIgR-pIgA). In the endosomes, retriever complex drives the retrieval and recycling of NxxY-motif-containing cargo proteins by coupling to SNX17, a cargo essential for the homeostatic maintenance of numerous cell surface proteins associated with processes that include cell migration, cell adhesion, nutrient supply and cell signaling. The recruitment of the retriever complex to the endosomal membrane involves CCC and WASH complexes. Involved in GLUT1 endosome-to-plasma membrane trafficking; the function is dependent of association with ANKRD27. The polypeptide is Vacuolar protein sorting-associated protein 29 (Rattus norvegicus (Rat)).